The following is a 462-amino-acid chain: tRNA modification GTPase MnmE (462 aa).

(6S)-5-formyl-5,6,7,8-tetrahydrofolate-binding residues include R27, E89, and R128. The TrmE-type G domain occupies 223–383 (GLKIAIVGRP…LEAAILAAVG (161 aa)). Residues 233 to 238 (NVGKSS), 252 to 258 (TDLPGRT), and 277 to 280 (DTAG) contribute to the GTP site. Mg(2+) contacts are provided by S237 and T258. Residue K462 coordinates (6S)-5-formyl-5,6,7,8-tetrahydrofolate.

The protein belongs to the TRAFAC class TrmE-Era-EngA-EngB-Septin-like GTPase superfamily. TrmE GTPase family. In terms of assembly, homodimer. Heterotetramer of two MnmE and two MnmG subunits. The cofactor is K(+).

Its subcellular location is the cytoplasm. In terms of biological role, exhibits a very high intrinsic GTPase hydrolysis rate. Involved in the addition of a carboxymethylaminomethyl (cmnm) group at the wobble position (U34) of certain tRNAs, forming tRNA-cmnm(5)s(2)U34. This chain is tRNA modification GTPase MnmE, found in Synechococcus sp. (strain ATCC 27144 / PCC 6301 / SAUG 1402/1) (Anacystis nidulans).